The chain runs to 304 residues: Type II methyltransferase M.HindV (304 aa).

The SAM-dependent MTase C5-type domain occupies 1 to 299 (MKCVDLFSGC…SAIINFEKEP (299 aa)). Residue Cys75 is part of the active site.

The protein belongs to the class I-like SAM-binding methyltransferase superfamily. C5-methyltransferase family.

The enzyme catalyses a 2'-deoxycytidine in DNA + S-adenosyl-L-methionine = a 5-methyl-2'-deoxycytidine in DNA + S-adenosyl-L-homocysteine + H(+). A methylase, recognizes the double-stranded sequence 5'-GRCGYC-3', methylates C-? on both strands, and protects the DNA from cleavage by the HindV endonuclease. The protein is Type II methyltransferase M.HindV (hindVM) of Haemophilus influenzae (strain ATCC 51907 / DSM 11121 / KW20 / Rd).